A 480-amino-acid polypeptide reads, in one-letter code: Glutamyl-tRNA(Gln) amidotransferase subunit A (480 aa).

Catalysis depends on charge relay system residues Lys-79 and Ser-154. The disordered stretch occupies residues 133–156; the sequence is NENSAYGPVRNPRDKSRVPGGSSG. Ser-178 serves as the catalytic Acyl-ester intermediate.

It belongs to the amidase family. GatA subfamily. In terms of assembly, heterotrimer of A, B and C subunits.

It catalyses the reaction L-glutamyl-tRNA(Gln) + L-glutamine + ATP + H2O = L-glutaminyl-tRNA(Gln) + L-glutamate + ADP + phosphate + H(+). Its function is as follows. Allows the formation of correctly charged Gln-tRNA(Gln) through the transamidation of misacylated Glu-tRNA(Gln) in organisms which lack glutaminyl-tRNA synthetase. The reaction takes place in the presence of glutamine and ATP through an activated gamma-phospho-Glu-tRNA(Gln). The protein is Glutamyl-tRNA(Gln) amidotransferase subunit A of Koribacter versatilis (strain Ellin345).